We begin with the raw amino-acid sequence, 253 residues long: Large ribosomal subunit protein uL4 (253 aa).

Residues 78 to 107 (SRAARVPHAKGGRRAHPPKPEADRSEKVNT) are disordered. Over residues 82–94 (RVPHAKGGRRAHP) the composition is skewed to basic residues. A compositionally biased stretch (basic and acidic residues) spans 95 to 107 (PKPEADRSEKVNT).

It belongs to the universal ribosomal protein uL4 family. Part of the 50S ribosomal subunit.

In terms of biological role, one of the primary rRNA binding proteins, this protein initially binds near the 5'-end of the 23S rRNA. It is important during the early stages of 50S assembly. It makes multiple contacts with different domains of the 23S rRNA in the assembled 50S subunit and ribosome. Its function is as follows. Forms part of the polypeptide exit tunnel. The polypeptide is Large ribosomal subunit protein uL4 (Methanosarcina acetivorans (strain ATCC 35395 / DSM 2834 / JCM 12185 / C2A)).